Here is a 40-residue protein sequence, read N- to C-terminus: Cell division inhibitor MciZ (40 aa).

In terms of assembly, interacts with FtsZ. Binds to the C-terminal polymerization interface of FtsZ. Binds to FtsZ filaments.

Highly effective in inhibiting polymerization at low and intermediate concentrations of GTP and only partially effective at high GTP concentrations. Blocks Z-ring formation in the mother cell during sporulation by inhibiting the polymerization of FtsZ. Binds to the minus end of FtsZ and functions as a filament-capping protein. At high concentrations, is capable of both capping and sequestration of FtsZ. Decreases the GTPase activity of FtsZ. The polypeptide is Cell division inhibitor MciZ (Bacillus subtilis (strain 168)).